The sequence spans 198 residues: Recombination protein RecR (198 aa).

Residues 57 to 72 (CSVCGHITDQDPCYIC) form a C4-type zinc finger. A Toprim domain is found at 80 to 175 (SVICVVQDPK…KLSRIAHGLP (96 aa)).

Belongs to the RecR family.

May play a role in DNA repair. It seems to be involved in an RecBC-independent recombinational process of DNA repair. It may act with RecF and RecO. In Bacillus licheniformis (strain ATCC 14580 / DSM 13 / JCM 2505 / CCUG 7422 / NBRC 12200 / NCIMB 9375 / NCTC 10341 / NRRL NRS-1264 / Gibson 46), this protein is Recombination protein RecR.